Here is a 957-residue protein sequence, read N- to C-terminus: Glycine dehydrogenase (decarboxylating) (957 aa).

Lysine 702 is subject to N6-(pyridoxal phosphate)lysine.

It belongs to the GcvP family. As to quaternary structure, the glycine cleavage system is composed of four proteins: P, T, L and H. Requires pyridoxal 5'-phosphate as cofactor.

The catalysed reaction is N(6)-[(R)-lipoyl]-L-lysyl-[glycine-cleavage complex H protein] + glycine + H(+) = N(6)-[(R)-S(8)-aminomethyldihydrolipoyl]-L-lysyl-[glycine-cleavage complex H protein] + CO2. Functionally, the glycine cleavage system catalyzes the degradation of glycine. The P protein binds the alpha-amino group of glycine through its pyridoxal phosphate cofactor; CO(2) is released and the remaining methylamine moiety is then transferred to the lipoamide cofactor of the H protein. The chain is Glycine dehydrogenase (decarboxylating) from Bradyrhizobium sp. (strain BTAi1 / ATCC BAA-1182).